The sequence spans 1158 residues: MLRNGAQNGNINSESHESFGKAAKGFRIFSSFSSSQKLFQRRSSGSITHSPTALSSTTSLNENDGNHFRPASSLSFSPSSLSRKDSGPGDGLEVNKKNNFYRRSSSTDDFGISHARSRKEIQSLGRPHTRQSFSVSDVSNGSSYPNIRKNSVHVNAPMPSFPEGSTAVLLKHHSGSKSASAISNIAPSHSNSTSSRRPYIHPAFLSQVAVEFRKRLNIGDRVKDGLLYKDAFLGSEAVDVLMHIVRTTDRNLALLLGRALDSQKMFHDVTYSHRLRDSLKEVYQYRRIISPPPGLSSMDSNGSSIENNFLYTKRRANTSDSFDSVLSDSSTTPTISSSVQVNSLAFITSSLSAITKEPEAPETEYNPHGVFTLLTECYSSTCSRNRLCYSISCPRRLEQQARLHLKVQPVLSGGSTSITDKQEEDHRLWSENVPKQVVDQIDVREWKRQEIIFEVIYTERDFVRDLEYIRDFWIKPLSTSNVIPENNRQQFIRCVFHNIMQIHAVNSRLSNALNRTQTLQPVVNTIGDLFLDYVPKFEPFIKYGANQAIAKFEFEREKSTNRNFANYVHEVERLRESRKLELNGYLTKPTTRLARYPLLLSGVLKYTDKDNPDTENIPRVIEMIREFLTKLNYETGKTENRLSLLQLNEQLSCSPADRAKLTLFDPSRLLIFKGVVKLKASSYSNGDTENDIHMFLLDNFLLLCKIKIQMKRRVHKLHLRPLPLELLSISYIEDSPSRGSLPRRPSSALLTNPISITKSNPPPVKAYGLQLVFIGARGFSISLYLNTLIARDQWKQHIEKQQDIIRKRHLVFESRGICCQSWFTGNKLLCAVAYDAGRKLLFGTYKGLYISSRKSNNGSCLEPIFKLQLPNISQLDVIEEHNVLLLLAEKILYELPLDALDSVEQINSKSLRRVTGHVSFVKTGFCMQRILVCAVKSTVLNTTLRIYEADRALKNKKTQSLKKPFGNQATLKIFTEVQMPMEALSVHFLKTKLCVGSFKGFDIISLENAVFQSLLNPADTSFRFLEKREDIRPIAMFRLRGEFLLCYSDFAFFVNTNGWKSRQSWMINWEGQPQGCALCYPYILAFEPDFIEIRNAETAELVQIIMGQNIKLLTDGRGLISEGGEILYSTEPIPFSSGENPIVHSLILPPANAAGPAL.

The segment at 42-141 (RSSGSITHSP…SFSVSDVSNG (100 aa)) is disordered. Positions 45-63 (GSITHSPTALSSTTSLNEN) are enriched in polar residues. Positions 68-81 (FRPASSLSFSPSSL) are enriched in low complexity. Residues 97–108 (KNNFYRRSSSTD) show a composition bias toward polar residues. The segment covering 132-141 (SFSVSDVSNG) has biased composition (low complexity). The 188-residue stretch at 447 to 634 (KRQEIIFEVI…REFLTKLNYE (188 aa)) folds into the DH domain. The PH domain occupies 670-805 (LIFKGVVKLK…QHIEKQQDII (136 aa)). S746 and S747 each carry phosphoserine. Residues 825–1120 (GNKLLCAVAY…KLLTDGRGLI (296 aa)) form the CNH domain.

It is found in the cytoplasm. Functionally, stimulates the exchange of Rho1 and Rho5 GDP-bound form into GTP-bound form. Controls septum formation, cell wall synthesis and localization of F-actin patches. The polypeptide is Rho1 guanine nucleotide exchange factor 2 (rgf2) (Schizosaccharomyces pombe (strain 972 / ATCC 24843) (Fission yeast)).